The chain runs to 2153 residues: Genome polyprotein (2153 aa).

A lipid anchor (N-myristoyl glycine; by host) is attached at Gly2. The segment at 213–240 is disordered; sequence HTHPGQSGHQIRGPSQSNDRSGGKPDED. The segment covering 216–232 has biased composition (polar residues); sequence PGQSGHQIRGPSQSNDR. The segment at 565 to 584 is amphipathic alpha-helix; the sequence is ELQNNDDPVENFVESTLKEV. Active-site for protease 2A activity residues include His864 and Asp880. Residues Cys897 and Cys899 each coordinate Zn(2+). The For protease 2A activity role is filled by Cys951. Zn(2+) is bound by residues Cys957 and His959. Residues 1088-1158 are membrane-binding; that stretch reads SDSWLRKFTE…GFSSASSEAQ (71 aa). The oligomerization stretch occupies residues 1088 to 1224; that stretch reads SDSWLRKFTE…NPGCGKSLVT (137 aa). An RNA-binding region spans residues 1109 to 1113; that stretch reads SIKIG. The region spanning 1187 to 1346 is the SF3 helicase domain; the sequence is TKIQKDLKQL…FRNTTGLLDV (160 aa). 1214-1221 provides a ligand contact to ATP; that stretch reads GNPGCGKS. Zn(2+) contacts are provided by Cys1353, Cys1365, and Cys1370. Residues 1353–1370 form a C4-type; degenerate zinc finger; sequence CTGCPKPAHYKTCCPLLC. An RNA-binding region spans residues 1397-1404; it reads ENATRKKV. Residues 1408-1413 are oligomerization; the sequence is LDAIFQ. An intramembrane segment occupies 1460 to 1480; that stretch reads VHYMLNCLGSLIIILGTVYAL. Tyr1491 carries the post-translational modification O-(5'-phospho-RNA)-tyrosine. The Peptidase C3 domain occupies 1511-1689; the sequence is GPEHEFVRAL…YGAALLRKYF (179 aa). Residues His1550, Glu1581, and Cys1657 each act as for protease 3C activity in the active site. Residues 1920–2033 enclose the RdRp catalytic domain; sequence GELLAFDYTN…SYPFELDPME (114 aa). Mg(2+) is bound by residues Asp1926 and Asp2019.

Belongs to the picornaviruses polyprotein family. Interacts with capsid protein VP1 and capsid protein VP3 to form heterotrimeric protomers. In terms of assembly, interacts with capsid protein VP0, and capsid protein VP3 to form heterotrimeric protomers. Five protomers subsequently associate to form pentamers which serve as building blocks for the capsid. Interacts with capsid protein VP2, capsid protein VP3 and capsid protein VP4 following cleavage of capsid protein VP0. Interacts (via C-terminus) with capsid protein VP4 (via C-terminus). Interacts with host CDHR3 (via N-terminus); this interaction occurs near each threefold vertex of the capsid and allows the virus attachment and entry into the host cell. As to quaternary structure, interacts with capsid protein VP1 and capsid protein VP3 in the mature capsid. Interacts with host CDHR3 (via N-terminus); this interaction occurs near each threefold vertex of the capsid and allows the virus attachment and entry into the host cell. Interacts with capsid protein VP0 and capsid protein VP1 to form heterotrimeric protomers. Five protomers subsequently associate to form pentamers which serve as building blocks for the capsid. Interacts with capsid protein VP4 in the mature capsid. Interacts with protein 2C; this interaction may be important for virion morphogenesis. Interacts with host CDHR3 (via N-terminus); this interaction occurs near each threefold vertex of the capsid and allows the virus attachment and entry into the host cell. In terms of assembly, interacts (via C-terminus) with capsid protein VP1 (via C-terminus). Interacts with capsid protein VP3. As to quaternary structure, homodimer. Homohexamer; forms a hexameric ring structure with 6-fold symmetry characteristic of AAA+ ATPases. Interacts (via N-terminus) with host RTN3 (via reticulon domain); this interaction is important for viral replication. Interacts with capsid protein VP3; this interaction may be important for virion morphogenesis. In terms of assembly, interacts with protein 3CD. As to quaternary structure, homodimer. Interacts with host GBF1. Interacts (via GOLD domain) with host ACBD3 (via GOLD domain); this interaction allows the formation of a viral protein 3A/ACBD3 heterotetramer with a 2:2 stoichiometry, which will stimulate the recruitment of host PI4KB in order to synthesize PI4P at the viral RNA replication sites. Interacts with RNA-directed RNA polymerase. In terms of assembly, interacts with protein 3AB and with RNA-directed RNA polymerase. As to quaternary structure, interacts with Viral protein genome-linked and with protein 3CD. Mg(2+) is required as a cofactor. Post-translationally, specific enzymatic cleavages in vivo by the viral proteases yield processing intermediates and the mature proteins. Myristoylation is required for the formation of pentamers during virus assembly. Further assembly of 12 pentamers and a molecule of genomic RNA generates the provirion. In terms of processing, during virion maturation, immature virions are rendered infectious following cleavage of VP0 into VP4 and VP2. This maturation seems to be an autocatalytic event triggered by the presence of RNA in the capsid and it is followed by a conformational change infectious virion. Post-translationally, myristoylation is required during RNA encapsidation and formation of the mature virus particle. VPg is uridylylated by the polymerase into VPg-pUpU. This acts as a nucleotide-peptide primer for the genomic RNA replication.

Its subcellular location is the virion. It is found in the host cytoplasm. The protein resides in the host cytoplasmic vesicle membrane. It localises to the host nucleus. The catalysed reaction is a ribonucleoside 5'-triphosphate + H2O = a ribonucleoside 5'-diphosphate + phosphate + H(+). It carries out the reaction Selective cleavage of Gln-|-Gly bond in the poliovirus polyprotein. In other picornavirus reactions Glu may be substituted for Gln, and Ser or Thr for Gly.. It catalyses the reaction Selective cleavage of Tyr-|-Gly bond in the picornavirus polyprotein.. The enzyme catalyses RNA(n) + a ribonucleoside 5'-triphosphate = RNA(n+1) + diphosphate. Its activity is regulated as follows. Replication or transcription is subject to high level of random mutations by the nucleotide analog ribavirin. Functionally, forms an icosahedral capsid of pseudo T=3 symmetry with capsid proteins VP2 and VP3. The capsid is 300 Angstroms in diameter, composed of 60 copies of each capsid protein and enclosing the viral positive strand RNA genome. Capsid protein VP1 mainly forms the vertices of the capsid. The VP1 C-termini form 60 dominant spike-like protrusions on the surface of the virion. Capsid protein VP1 interacts with host cell receptor CDHR3 to provide virion attachment to target host cells. This attachment induces virion internalization. Tyrosine kinases are probably involved in the entry process. After binding to its receptor, the capsid undergoes conformational changes. Capsid protein VP1 N-terminus (that contains an amphipathic alpha-helix) and capsid protein VP4 are externalized. Together, they shape a pore in the host membrane through which viral genome is translocated to host cell cytoplasm. Forms an icosahedral capsid of pseudo T=3 symmetry with capsid proteins VP2 and VP3. The capsid is 300 Angstroms in diameter, composed of 60 copies of each capsid protein and enclosing the viral positive strand RNA genome. In terms of biological role, lies on the inner surface of the capsid shell. After binding to the host receptor, the capsid undergoes conformational changes. Capsid protein VP4 is released, Capsid protein VP1 N-terminus is externalized, and together, they shape a pore in the host membrane through which the viral genome is translocated into the host cell cytoplasm. Its function is as follows. Component of immature procapsids, which is cleaved into capsid proteins VP4 and VP2 after maturation. Allows the capsid to remain inactive before the maturation step. Functionally, cysteine protease that cleaves viral polyprotein and specific host proteins. It is responsible for the autocatalytic cleavage between the P1 and P2 regions, which is the first cleavage occurring in the polyprotein. Also cleaves the host translation initiation factor EIF4G1, in order to shut down the capped cellular mRNA translation. Inhibits the host nucleus-cytoplasm protein and RNA trafficking by cleaving host members of the nuclear pores. Counteracts stress granule formation probably by antagonizing its assembly or promoting its dissassembly. Plays an essential role in the virus replication cycle by acting as a viroporin. Creates a pore in the host endoplasmic reticulum and as a consequence releases Ca2+ in the cytoplasm of infected cell. In turn, high levels of cytoplasmic calcium may trigger membrane trafficking and transport of viral ER-associated proteins to viroplasms, sites of viral genome replication. In terms of biological role, induces and associates with structural rearrangements of intracellular membranes. Displays RNA-binding, nucleotide binding and NTPase activities. May play a role in virion morphogenesis and viral RNA encapsidation by interacting with the capsid protein VP3. Its function is as follows. Localizes the viral replication complex to the surface of membranous vesicles. Together with protein 3CD binds the Cis-Active RNA Element (CRE) which is involved in RNA synthesis initiation. Acts as a cofactor to stimulate the activity of 3D polymerase, maybe through a nucleid acid chaperone activity. Functionally, localizes the viral replication complex to the surface of membranous vesicles. It inhibits host cell endoplasmic reticulum-to-Golgi apparatus transport and causes the disassembly of the Golgi complex, possibly through GBF1 interaction. This would result in depletion of MHC, trail receptors and IFN receptors at the host cell surface. Plays an essential role in viral RNA replication by recruiting ACBD3 and PI4KB at the viral replication sites, thereby allowing the formation of the rearranged membranous structures where viral replication takes place. Acts as a primer for viral RNA replication and remains covalently bound to viral genomic RNA. VPg is uridylylated prior to priming replication into VPg-pUpU. The oriI viral genomic sequence may act as a template for this. The VPg-pUpU is then used as primer on the genomic RNA poly(A) by the RNA-dependent RNA polymerase to replicate the viral genome. During genome replication, the VPg-RNA linkage is removed by the host TDP2, thereby accelerating replication. During the late stage of the replication cycle, host TDP2 is excluded from sites of viral RNA synthesis and encapsidation, allowing for the generation of progeny virions. In terms of biological role, involved in the viral replication complex and viral polypeptide maturation. It exhibits protease activity with a specificity and catalytic efficiency that is different from protease 3C. Protein 3CD lacks polymerase activity. Protein 3CD binds to the 5'UTR of the viral genome. Its function is as follows. Major viral protease that mediates proteolytic processing of the polyprotein. Cleaves host EIF5B, contributing to host translation shutoff. Also cleaves host PABPC1, contributing to host translation shutoff. Functionally, replicates the viral genomic RNA on the surface of intracellular membranes. May form linear arrays of subunits that propagate along a strong head-to-tail interaction called interface-I. Covalently attaches UMP to a tyrosine of VPg, which is used to prime RNA synthesis. The positive stranded RNA genome is first replicated at virus induced membranous vesicles, creating a dsRNA genomic replication form. This dsRNA is then used as template to synthesize positive stranded RNA genomes. ss(+)RNA genomes are either translated, replicated or encapsidated. The sequence is that of Genome polyprotein from Homo sapiens (Human).